Consider the following 1692-residue polypeptide: Cullin-7 (1692 aa).

The CPH domain occupies 348–421 (RTAFASVNTY…HWHMLEILGF (74 aa)). The region spanning 791-970 (PIQIPFFDVF…HTRLFYMVRA (180 aa)) is the DOC domain. Basic and acidic residues predominate over residues 1319 to 1335 (VAHEDSGKEHKSKKEDA). A disordered region spans residues 1319–1374 (VAHEDSGKEHKSKKEDAAGETAAVAMADEEEEEGKKEEGEEEEGEGEEELEEEEER). A compositionally biased stretch (acidic residues) spans 1357-1374 (GEEEEGEGEEELEEEEER). A Glycyl lysine isopeptide (Lys-Gly) (interchain with G-Cter in NEDD8) cross-link involves residue Lys1570.

This sequence belongs to the cullin family. In terms of assembly, component of the 3M complex, composed of core components CUL7, CCDC8 and OBSL1. Component of the Cul7-RING(FBXW8) complex consisting of CUL7, RBX1, SKP1 and FBXW8. Within the Cul7-RING(FBXW8) complex interacts with FBXW8 and RBX1, but not with SKP1. Interacts with CUL1 (via the C-terminal domain); the interaction seems to be mediated by FBXW8; it is likely specific to FBXW8, but not other F-box proteins. Interacts (via the CPH domain) with p53/TP53; the interaction preferentially involves tetrameric and dimeric p53/TP53; this interaction recruits p53/TP53 for ubiquitination by neddylated CUL1-RBX1. The CUL7-CUL9 heterodimer seems to interact specifically with p53/TP53. Interacts with FBXW8; interaction is mutually exclusive of binding to CUL9 or p53/TP53. Interacts with CUL9; leading to inhibited CUL9 activity. Interacts with OBSL1. Interacts (as part of the 3M complex) with HDAC4 and HDAC5; it is negatively regulated by ANKRA2.

The protein resides in the cytoplasm. Its subcellular location is the cytoskeleton. The protein localises to the microtubule organizing center. It localises to the centrosome. It is found in the perinuclear region. The protein resides in the golgi apparatus. Its pathway is protein modification; protein ubiquitination. Its function is as follows. Core component of the 3M and Cul7-RING(FBXW8) complexes, which mediate the ubiquitination and subsequent proteasomal degradation of target proteins. Core component of the 3M complex, a complex required to regulate microtubule dynamics and genome integrity. It is unclear how the 3M complex regulates microtubules, it could act by controlling the level of a microtubule stabilizer. The Cul7-RING(FBXW8) complex alone lacks ubiquitination activity and does not promote polyubiquitination and proteasomal degradation of p53/TP53. However it mediates recruitment of p53/TP53 for ubiquitination by neddylated CUL1-RBX1. Interaction with CUL9 is required to inhibit CUL9 activity and ubiquitination of BIRC5. The Cul7-RING(FBXW8) complex also mediates ubiquitination and consequent degradation of target proteins such as GORASP1, IRS1 and MAP4K1/HPK1. Ubiquitination of GORASP1 regulates Golgi morphogenesis and dendrite patterning in brain. Mediates ubiquitination and degradation of IRS1 in a mTOR-dependent manner: the Cul7-RING(FBXW8) complex recognizes and binds IRS1 previously phosphorylated by S6 kinase (RPS6KB1 or RPS6KB2). The Cul7-RING(FBXW8) complex also mediates ubiquitination of MAP4K1/HPK1: recognizes and binds autophosphorylated MAP4K1/HPK1, leading to its degradation, thereby affecting cell proliferation and differentiation. Acts as a regulator in trophoblast cell epithelial-mesenchymal transition and placental development. While the Cul7-RING(FBXW8) and the 3M complexes are associated and involved in common processes, CUL7 and the Cul7-RING(FBXW8) complex may have additional functions. Probably plays a role in the degradation of proteins involved in endothelial proliferation and/or differentiation. The sequence is that of Cullin-7 (Cul7) from Rattus norvegicus (Rat).